The sequence spans 210 residues: MTTKDCGNHGGGGGGGTASRICGVIIGFIIIVLITIFLVWIILQPTKPRFILQDATVYAFNLSQPNLLTSNFQITIASRNRNSRIGIYYDRLHVYATYRNQQITLRTAIPPTYQGHKEDNVWSPFVYGNSVPIAPFNAVALGDEQNRGFVTLIIRADGRVRWKVGTLITGKYHLHVRCQAFINLADKAAGVHVGENAVKYMLINKCSVNV.

A helical transmembrane segment spans residues 23–43 (GVIIGFIIIVLITIFLVWIIL). A glycan (N-linked (GlcNAc...) asparagine) is linked at Asn61.

As to quaternary structure, may form oligomers or be a component of larger protein complex in plasma membranes. As to expression, expressed in leaves, stems and flowers, and, to a lower extent, in siliques and roots.

The protein localises to the cell membrane. Functionally, may play a role in plant immunity. The sequence is that of NDR1/HIN1-like protein 12 from Arabidopsis thaliana (Mouse-ear cress).